A 534-amino-acid chain; its full sequence is N-acetylglutamate synthase, mitochondrial (534 aa).

The transit peptide at 1–18 directs the protein to the mitochondrion; sequence MATALMAVVLRAAAVAPR. The disordered stretch occupies residues 19–99; the sequence is LRGRGGTGGA…HESPEPPSGR (81 aa). The tract at residues 19–376 is amino-acid kinase domain (AAK); it reads LRGRGGTGGA…SGTLFKNAER (358 aa). Over residues 81 to 96 the composition is skewed to pro residues; the sequence is VPSPRPPVPHESPEPP. Residues 375–526 enclose the N-acetyltransferase domain; the sequence is ERMLRVRSLD…HAKGLPDSFH (152 aa). Residues Lys401, Lys444, and 474-479 each bind substrate; that span reads RSRVTN.

It belongs to the acetyltransferase family. Homodimer. Homotetramer. Post-translationally, probably processed by mitochondrial processing peptidase (MPP). The long form has not yet been isolated. Highly expressed in the adult liver, kidney and small intestine. Weakly expressed in the fetal liver, lung, pancreas, placenta, heart and brain tissue.

Its subcellular location is the mitochondrion matrix. The enzyme catalyses L-glutamate + acetyl-CoA = N-acetyl-L-glutamate + CoA + H(+). It functions in the pathway amino-acid biosynthesis; L-arginine biosynthesis; N(2)-acetyl-L-ornithine from L-glutamate: step 1/4. With respect to regulation, increased by L-arginine. Its function is as follows. Plays a role in the regulation of ureagenesis by producing the essential cofactor N-acetylglutamate (NAG), thus modulating carbamoylphosphate synthase I (CPS1) activity. The protein is N-acetylglutamate synthase, mitochondrial (NAGS) of Homo sapiens (Human).